The following is a 169-amino-acid chain: Shikimate kinase (169 aa).

Residue 12-17 coordinates ATP; it reads AVGKTT. Mg(2+) is bound at residue T16. Substrate contacts are provided by D34, R58, and G80. R119 contributes to the ATP binding site. A substrate-binding site is contributed by R139. Residue R156 participates in ATP binding.

It belongs to the shikimate kinase family. As to quaternary structure, monomer. Mg(2+) serves as cofactor.

The protein resides in the cytoplasm. The catalysed reaction is shikimate + ATP = 3-phosphoshikimate + ADP + H(+). The protein operates within metabolic intermediate biosynthesis; chorismate biosynthesis; chorismate from D-erythrose 4-phosphate and phosphoenolpyruvate: step 5/7. In terms of biological role, catalyzes the specific phosphorylation of the 3-hydroxyl group of shikimic acid using ATP as a cosubstrate. The sequence is that of Shikimate kinase from Alkaliphilus oremlandii (strain OhILAs) (Clostridium oremlandii (strain OhILAs)).